Consider the following 250-residue polypeptide: MVLTSDHLDKKNIRKIEYKGEDSFSNSMSKLPLQGGMSDSIFMASISDFSNWSRLSSLWPLLYGTSCCFIEFASLIGSRFDFDRYGLVPRSSPRQADLIVTAGTITMKMAPSLIRLYEQMPEPKYVIAMGACTITGGMFSTDSYSTVRGVDKLIPVDIYLPGCPPKPEAIMDAVTKLRKKIARNRFVNRASRPIRTKYFSISHQLNLVPGTCAGKYNWDRENCGTKLAPANFSENCQKFANEHDELKSAI.

[4Fe-4S] cluster contacts are provided by cysteine 67, cysteine 68, cysteine 132, and cysteine 163.

The protein belongs to the complex I 20 kDa subunit family. NDH is composed of at least 16 different subunits, 5 of which are encoded in the nucleus. It depends on [4Fe-4S] cluster as a cofactor.

It localises to the plastid. It is found in the chloroplast thylakoid membrane. The catalysed reaction is a plastoquinone + NADH + (n+1) H(+)(in) = a plastoquinol + NAD(+) + n H(+)(out). It catalyses the reaction a plastoquinone + NADPH + (n+1) H(+)(in) = a plastoquinol + NADP(+) + n H(+)(out). In terms of biological role, NDH shuttles electrons from NAD(P)H:plastoquinone, via FMN and iron-sulfur (Fe-S) centers, to quinones in the photosynthetic chain and possibly in a chloroplast respiratory chain. The immediate electron acceptor for the enzyme in this species is believed to be plastoquinone. Couples the redox reaction to proton translocation, and thus conserves the redox energy in a proton gradient. This chain is NAD(P)H-quinone oxidoreductase subunit K, chloroplastic, found in Adiantum capillus-veneris (Maidenhair fern).